The sequence spans 263 residues: N-acyl homoserine lactonase AttM (263 aa).

The Zn(2+) site is built by His103, His105, Asp107, His108, His180, Asp202, and His247.

The protein belongs to the metallo-beta-lactamase superfamily. Zn(2+) is required as a cofactor.

The enzyme catalyses an N-acyl-L-homoserine lactone + H2O = an N-acyl-L-homoserine + H(+). This Azorhizobium caulinodans (strain ATCC 43989 / DSM 5975 / JCM 20966 / LMG 6465 / NBRC 14845 / NCIMB 13405 / ORS 571) protein is N-acyl homoserine lactonase AttM.